A 283-amino-acid chain; its full sequence is ATP phosphoribosyltransferase (283 aa).

Belongs to the ATP phosphoribosyltransferase family. Long subfamily. Requires Mg(2+) as cofactor.

The protein resides in the cytoplasm. The catalysed reaction is 1-(5-phospho-beta-D-ribosyl)-ATP + diphosphate = 5-phospho-alpha-D-ribose 1-diphosphate + ATP. Its pathway is amino-acid biosynthesis; L-histidine biosynthesis; L-histidine from 5-phospho-alpha-D-ribose 1-diphosphate: step 1/9. Its activity is regulated as follows. Feedback inhibited by histidine. Catalyzes the condensation of ATP and 5-phosphoribose 1-diphosphate to form N'-(5'-phosphoribosyl)-ATP (PR-ATP). Has a crucial role in the pathway because the rate of histidine biosynthesis seems to be controlled primarily by regulation of HisG enzymatic activity. The chain is ATP phosphoribosyltransferase from Ignicoccus hospitalis (strain KIN4/I / DSM 18386 / JCM 14125).